A 332-amino-acid chain; its full sequence is 4-hydroxythreonine-4-phosphate dehydrogenase (332 aa).

Substrate is bound by residues histidine 136 and threonine 137. A divalent metal cation-binding residues include histidine 166, histidine 211, and histidine 266. Lysine 274, asparagine 283, and arginine 292 together coordinate substrate.

It belongs to the PdxA family. As to quaternary structure, homodimer. Zn(2+) is required as a cofactor. Requires Mg(2+) as cofactor. The cofactor is Co(2+).

It is found in the cytoplasm. The enzyme catalyses 4-(phosphooxy)-L-threonine + NAD(+) = 3-amino-2-oxopropyl phosphate + CO2 + NADH. The protein operates within cofactor biosynthesis; pyridoxine 5'-phosphate biosynthesis; pyridoxine 5'-phosphate from D-erythrose 4-phosphate: step 4/5. In terms of biological role, catalyzes the NAD(P)-dependent oxidation of 4-(phosphooxy)-L-threonine (HTP) into 2-amino-3-oxo-4-(phosphooxy)butyric acid which spontaneously decarboxylates to form 3-amino-2-oxopropyl phosphate (AHAP). The chain is 4-hydroxythreonine-4-phosphate dehydrogenase from Wigglesworthia glossinidia brevipalpis.